The following is a 500-amino-acid chain: Cytochrome P450 2D14 (500 aa).

Cysteine 446 provides a ligand contact to heme.

The protein belongs to the cytochrome P450 family. It depends on heme as a cofactor.

The protein resides in the endoplasmic reticulum membrane. It is found in the microsome membrane. The catalysed reaction is an organic molecule + reduced [NADPH--hemoprotein reductase] + O2 = an alcohol + oxidized [NADPH--hemoprotein reductase] + H2O + H(+). In terms of biological role, cytochromes P450 are a group of heme-thiolate monooxygenases. In liver microsomes, this enzyme is involved in an NADPH-dependent electron transport pathway. It oxidizes a variety of structurally unrelated compounds, including steroids, fatty acids, and xenobiotics. The chain is Cytochrome P450 2D14 (CYP2D14) from Bos taurus (Bovine).